Consider the following 410-residue polypeptide: Cysteine desulfurase IscS (410 aa).

Residues 80-81 (AT), Asn-160, Gln-188, and 208-210 (SGH) contribute to the pyridoxal 5'-phosphate site. An N6-(pyridoxal phosphate)lysine modification is found at Lys-211. Residue Thr-248 participates in pyridoxal 5'-phosphate binding. Catalysis depends on Cys-334, which acts as the Cysteine persulfide intermediate. Cys-334 contacts [2Fe-2S] cluster.

This sequence belongs to the class-V pyridoxal-phosphate-dependent aminotransferase family. NifS/IscS subfamily. As to quaternary structure, homodimer. Forms a heterotetramer with IscU, interacts with other sulfur acceptors. Pyridoxal 5'-phosphate is required as a cofactor.

Its subcellular location is the cytoplasm. The enzyme catalyses (sulfur carrier)-H + L-cysteine = (sulfur carrier)-SH + L-alanine. The protein operates within cofactor biosynthesis; iron-sulfur cluster biosynthesis. Functionally, master enzyme that delivers sulfur to a number of partners involved in Fe-S cluster assembly, tRNA modification or cofactor biosynthesis. Catalyzes the removal of elemental sulfur atoms from cysteine to produce alanine. Functions as a sulfur delivery protein for Fe-S cluster synthesis onto IscU, an Fe-S scaffold assembly protein, as well as other S acceptor proteins. This is Cysteine desulfurase IscS from Rickettsia felis (strain ATCC VR-1525 / URRWXCal2) (Rickettsia azadi).